A 74-amino-acid chain; its full sequence is Protein SlyX homolog (74 aa).

Positions Gln54–Tyr74 are disordered.

This sequence belongs to the SlyX family.

This is Protein SlyX homolog from Neisseria gonorrhoeae (strain ATCC 700825 / FA 1090).